The chain runs to 173 residues: Probable transcription termination protein NusA (173 aa).

A KH domain is found at 31–97 (DEKIVFVVKE…EDVWVKKFGN (67 aa)). Residues 147–162 (ADNRPKKDEIPEKAAE) are compositionally biased toward basic and acidic residues. Residues 147–173 (ADNRPKKDEIPEKAAESSENVQAEENQ) form a disordered region. The span at 163–173 (SSENVQAEENQ) shows a compositional bias: polar residues.

Belongs to the NusA family.

Its subcellular location is the cytoplasm. Functionally, participates in transcription termination. This Methanococcus vannielii (strain ATCC 35089 / DSM 1224 / JCM 13029 / OCM 148 / SB) protein is Probable transcription termination protein NusA.